We begin with the raw amino-acid sequence, 266 residues long: Putative hydro-lyase VF_1377 (266 aa).

It belongs to the D-glutamate cyclase family.

The protein is Putative hydro-lyase VF_1377 of Aliivibrio fischeri (strain ATCC 700601 / ES114) (Vibrio fischeri).